An 893-amino-acid polypeptide reads, in one-letter code: UPF0182 protein CLM_0018 (893 aa).

7 consecutive transmembrane segments (helical) span residues 9-29 (IPLFIIILFIAFFNKIINFII), 49-69 (AIIILMIPIFIIFFISIWMYY), 94-114 (LFFIFNFIVSIFLAYIFSSSY), 154-174 (VIISLLLFLVITTFIAYFILE), 202-222 (LAIVSGLIILFISFGHLIKIW), 246-266 (FYKIIVVITLISSIVTLLSIV), and 273-293 (VSVCIGITIFLIVSQNIASFL).

It belongs to the UPF0182 family.

The protein resides in the cell membrane. The protein is UPF0182 protein CLM_0018 of Clostridium botulinum (strain Kyoto / Type A2).